The sequence spans 825 residues: MDNFKIYSTVITTAFLQVPHLYTTNRLWKPIEAPFLVEFLQKRISSKELKNTKAICHIDPSWVNLNASFIRDDMISIKATTDDMDLDAICRISLPLPMNTNDLTAELEKMKRILLDLSEKFNLELIITKEPAYFTPEQTGESKELCIYVHALGFRSNLMECEPQLLAFVDLIKKNGMTLPPQHYIIEPMELNSYSVLPLYMGVDMENFKHISRAFKTSIYAPSLITLSRDLKANPQIFFSGAVHSLSLLARKTLRESISVNSKSFFYRRLTNITPGKLLFIRKYYQQKVNQLILKYQSLIRVTNEYIEFQSISTNLLEMVIKNFTIQVLHEIVEVQISLNENCAMSPELIIDSFFGHTGNQIVVITPKEDSFNQLIVVGNQSSTDEASDTSILHYLSDFIMGSNQVINPNLRQIKAIFEIHPDFEDFISGKKNGKLTRIMELSACLIQLEMEEEDDNLYLNLVSDSFPDFKESFKNVINEFPAEESFFIPEVCHRPIIGTGGSLIQATMRKHNVFIQFSNSFNLPQNKISMIRYDNVIIRCPRKNKANICLAKNDLKQIVQEYDSLQSKTLIRFSSGQYRHILHVNGQKNIIGQIEKNENVYIMIPLKEPLDGTSQLSIQGNDENASRAANELVNSAFGYEYEFKIDQEIDPNKEYEFYNLIVVPFLQIMNIIVTFEKDLITFTFEKDTNENTLTKAIELLSNYLETQKTKIIFKKIIKKFVLGSASSKSNTSNSNTNGNFRSMNNAKSRTTIDNTSQSGASPQRHKMPVITTVGGAQAIKGYIPNTYYNGYGYGYGYTYEYDYNYANSNKAQTNNRHKYQNGRK.

One can recognise a KH domain in the interval 482–556 (PAEESFFIPE…ANICLAKNDL (75 aa)). Residues 727–740 (SSKSNTSNSNTNGN) are compositionally biased toward low complexity. A disordered region spans residues 727 to 766 (SSKSNTSNSNTNGNFRSMNNAKSRTTIDNTSQSGASPQRH). Residues 741–762 (FRSMNNAKSRTTIDNTSQSGAS) show a composition bias toward polar residues. S762 carries the post-translational modification Phosphoserine.

It is found in the cytoplasm. The polypeptide is KH domain-containing protein YLL032C (Saccharomyces cerevisiae (strain ATCC 204508 / S288c) (Baker's yeast)).